A 223-amino-acid chain; its full sequence is Thiamine-phosphate synthase (223 aa).

4-amino-2-methyl-5-(diphosphooxymethyl)pyrimidine contacts are provided by residues 45–49 (QYREK) and N77. Mg(2+)-binding residues include D78 and D97. T116 contributes to the 4-amino-2-methyl-5-(diphosphooxymethyl)pyrimidine binding site. Residue 142–144 (SYT) participates in 2-[(2R,5Z)-2-carboxy-4-methylthiazol-5(2H)-ylidene]ethyl phosphate binding. K145 lines the 4-amino-2-methyl-5-(diphosphooxymethyl)pyrimidine pocket. 2-[(2R,5Z)-2-carboxy-4-methylthiazol-5(2H)-ylidene]ethyl phosphate contacts are provided by residues G173 and 193–194 (VT).

This sequence belongs to the thiamine-phosphate synthase family. The cofactor is Mg(2+).

It carries out the reaction 2-[(2R,5Z)-2-carboxy-4-methylthiazol-5(2H)-ylidene]ethyl phosphate + 4-amino-2-methyl-5-(diphosphooxymethyl)pyrimidine + 2 H(+) = thiamine phosphate + CO2 + diphosphate. It catalyses the reaction 2-(2-carboxy-4-methylthiazol-5-yl)ethyl phosphate + 4-amino-2-methyl-5-(diphosphooxymethyl)pyrimidine + 2 H(+) = thiamine phosphate + CO2 + diphosphate. The catalysed reaction is 4-methyl-5-(2-phosphooxyethyl)-thiazole + 4-amino-2-methyl-5-(diphosphooxymethyl)pyrimidine + H(+) = thiamine phosphate + diphosphate. It functions in the pathway cofactor biosynthesis; thiamine diphosphate biosynthesis; thiamine phosphate from 4-amino-2-methyl-5-diphosphomethylpyrimidine and 4-methyl-5-(2-phosphoethyl)-thiazole: step 1/1. Condenses 4-methyl-5-(beta-hydroxyethyl)thiazole monophosphate (THZ-P) and 2-methyl-4-amino-5-hydroxymethyl pyrimidine pyrophosphate (HMP-PP) to form thiamine monophosphate (TMP). This is Thiamine-phosphate synthase from Dictyoglomus turgidum (strain DSM 6724 / Z-1310).